A 342-amino-acid chain; its full sequence is Nucleoid-associated protein Spea_1765 (342 aa).

It belongs to the YejK family.

Its subcellular location is the cytoplasm. The protein resides in the nucleoid. In Shewanella pealeana (strain ATCC 700345 / ANG-SQ1), this protein is Nucleoid-associated protein Spea_1765.